Here is a 492-residue protein sequence, read N- to C-terminus: Catalase isozyme 2 (492 aa).

Residues histidine 65 and asparagine 138 contribute to the active site. Tyrosine 348 contributes to the heme binding site.

The protein belongs to the catalase family. Homotetramer. Heme serves as cofactor.

It is found in the peroxisome. It carries out the reaction 2 H2O2 = O2 + 2 H2O. Occurs in almost all aerobically respiring organisms and serves to protect cells from the toxic effects of hydrogen peroxide. This Nicotiana plumbaginifolia (Leadwort-leaved tobacco) protein is Catalase isozyme 2 (CAT2).